The sequence spans 143 residues: MSEIITVKRLFSDAKIPVRHSEGAAAYDLYAYEDTVVAPNERKVIATGVRITVPLSCQGTIYSRSGLALKYCIEIFGVNIGPGETKDIVVDIYNHGKMPFNVAKGDRIAQIVFIKLFGGDLHEVSELSDTKRGSCGWGSTGIS.

4 residues coordinate dUMP: Ser-65, Val-78, Arg-132, and Gly-138.

It belongs to the dUTPase family. As to quaternary structure, homotrimer. Mg(2+) serves as cofactor.

It carries out the reaction dUTP + H2O = dUMP + diphosphate + H(+). Its pathway is pyrimidine metabolism; dUMP biosynthesis; dUMP from dCTP (dUTP route): step 2/2. Functionally, involved in nucleotide metabolism via production of dUMP, the immediate precursor of thymidine nucleotides, and decreases the intracellular concentration of dUTP so that uracil cannot be incorporated into DNA. In Antonospora locustae (Microsporidian parasite), this protein is Deoxyuridine 5'-triphosphate nucleotidohydrolase (DUT1).